Consider the following 1111-residue polypeptide: Receptor-type guanylate cyclase gcy-7 (1111 aa).

The first 24 residues, 1 to 24 (MKPFYSMSLVLFLVITLLPKPMFP), serve as a signal peptide directing secretion. The Extracellular segment spans residues 25 to 488 (QVATGTTGNV…CPKSFVDEYL (464 aa)). N-linked (GlcNAc...) asparagine glycans are attached at residues Asn80, Asn300, Asn326, Asn353, Asn389, Asn407, Asn430, and Asn441. A helical membrane pass occupies residues 489–509 (IWVIVAIVVLFLAITAAACGI). Over 510–1111 (YFSIQARRQE…TLKSDEQLSD (602 aa)) the chain is Cytoplasmic. One can recognise a Protein kinase domain in the interval 536–838 (QINSKQKGKG…NDNLMDHVFN (303 aa)). ATP-binding positions include 542–550 (KGKGEHSVR) and Lys568. The Guanylate cyclase domain occupies 896 to 1026 (TIFFSDVVQF…DAVNTASRME (131 aa)).

It belongs to the adenylyl cyclase class-4/guanylyl cyclase family. Expressed asymmetrically in ASE left (ASEL) sensory neuron. Expressed in excretory canal cell.

It localises to the cell membrane. It catalyses the reaction GTP = 3',5'-cyclic GMP + diphosphate. Guanylate cyclase involved in the production of the second messenger cGMP. Unlike other guanylate cyclases expressed in ASE neurons, may not play a role in chemotaxis responses toward salt ions in ASEL (ASE left) sensory neurons. The polypeptide is Receptor-type guanylate cyclase gcy-7 (Caenorhabditis elegans).